Reading from the N-terminus, the 614-residue chain is Dihydroxy-acid dehydratase (614 aa).

Asp-81 is a Mg(2+) binding site. Cys-122 contributes to the [2Fe-2S] cluster binding site. Mg(2+) is bound by residues Asp-123 and Lys-124. Lys-124 is subject to N6-carboxylysine. Cys-195 is a [2Fe-2S] cluster binding site. Glu-491 provides a ligand contact to Mg(2+). Ser-517 acts as the Proton acceptor in catalysis.

The protein belongs to the IlvD/Edd family. Homodimer. [2Fe-2S] cluster serves as cofactor. The cofactor is Mg(2+).

It carries out the reaction (2R)-2,3-dihydroxy-3-methylbutanoate = 3-methyl-2-oxobutanoate + H2O. The enzyme catalyses (2R,3R)-2,3-dihydroxy-3-methylpentanoate = (S)-3-methyl-2-oxopentanoate + H2O. It participates in amino-acid biosynthesis; L-isoleucine biosynthesis; L-isoleucine from 2-oxobutanoate: step 3/4. It functions in the pathway amino-acid biosynthesis; L-valine biosynthesis; L-valine from pyruvate: step 3/4. Functionally, functions in the biosynthesis of branched-chain amino acids. Catalyzes the dehydration of (2R,3R)-2,3-dihydroxy-3-methylpentanoate (2,3-dihydroxy-3-methylvalerate) into 2-oxo-3-methylpentanoate (2-oxo-3-methylvalerate) and of (2R)-2,3-dihydroxy-3-methylbutanoate (2,3-dihydroxyisovalerate) into 2-oxo-3-methylbutanoate (2-oxoisovalerate), the penultimate precursor to L-isoleucine and L-valine, respectively. This Rhodopseudomonas palustris (strain BisA53) protein is Dihydroxy-acid dehydratase.